The chain runs to 306 residues: Tyrosine recombinase XerC (306 aa).

Residues 1 to 85 enclose the Core-binding (CB) domain; the sequence is MQQQLEQFLA…AIKSFFEYLQ (85 aa). Residues 106-289 form the Tyr recombinase domain; sequence FLPKAITVAQ…SNDRAVKYDQ (184 aa). Residues arginine 147, lysine 171, histidine 241, arginine 244, and histidine 267 contribute to the active site. Tyrosine 276 (O-(3'-phospho-DNA)-tyrosine intermediate) is an active-site residue.

This sequence belongs to the 'phage' integrase family. XerC subfamily. In terms of assembly, forms a cyclic heterotetrameric complex composed of two molecules of XerC and two molecules of XerD.

The protein resides in the cytoplasm. In terms of biological role, site-specific tyrosine recombinase, which acts by catalyzing the cutting and rejoining of the recombining DNA molecules. The XerC-XerD complex is essential to convert dimers of the bacterial chromosome into monomers to permit their segregation at cell division. It also contributes to the segregational stability of plasmids. The chain is Tyrosine recombinase XerC from Herpetosiphon aurantiacus (strain ATCC 23779 / DSM 785 / 114-95).